The primary structure comprises 94 residues: Integration host factor subunit beta (94 aa).

It belongs to the bacterial histone-like protein family. As to quaternary structure, heterodimer of an alpha and a beta chain.

This protein is one of the two subunits of integration host factor, a specific DNA-binding protein that functions in genetic recombination as well as in transcriptional and translational control. This chain is Integration host factor subunit beta, found in Sodalis glossinidius (strain morsitans).